The sequence spans 322 residues: Probable cardiolipin synthase (CMP-forming) (322 aa).

A run of 3 helical transmembrane segments spans residues 143–163 (IGYV…AFAG), 199–219 (LVIS…IVVF), and 289–309 (LQGL…SYVM).

Belongs to the CDP-alcohol phosphatidyltransferase class-I family.

The protein localises to the mitochondrion inner membrane. The enzyme catalyses a CDP-1,2-diacyl-sn-glycerol + a 1,2-diacyl-sn-glycero-3-phospho-(1'-sn-glycerol) = a cardiolipin + CMP + H(+). Functionally, catalyzes the synthesis of cardiolipin (CL) (diphosphatidylglycerol) by specifically transferring a phosphatidyl group from CDP-diacylglycerol to phosphatidylglycerol (PG). CL is a key phospholipid in mitochondrial membranes and plays important roles in maintaining the functional integrity and dynamics of mitochondria under both optimal and stress conditions. In Drosophila melanogaster (Fruit fly), this protein is Probable cardiolipin synthase (CMP-forming) (CLS).